A 421-amino-acid polypeptide reads, in one-letter code: Synaptotagmin-12 (421 aa).

Residues 1–18 (MAVDVAEYHLSVIKSPPG) lie on the Vesicular side of the membrane. Residues 19 to 39 (WEVGVYAAGALALLGIAAVSL) traverse the membrane as a helical segment. At 40-421 (WKLWTSGSFP…VSMWHAVRRN (382 aa)) the chain is on the cytoplasmic side. Phosphoserine occurs at positions 97, 99, and 214. C2 domains are found at residues 152-272 (TLGQ…SGWL) and 283-416 (AVGE…SMWH).

The protein belongs to the synaptotagmin family. Homodimer. Can also form heterodimers. Interacts with SYT1. In terms of processing, phosphorylation of Ser-97 is required for mossy-fiber long-term potentiation.

It localises to the cytoplasmic vesicle. Its subcellular location is the secretory vesicle. The protein localises to the synaptic vesicle membrane. Synaptic vesicle phosphoprotein that enhances spontaneous neurotransmitter release but does not effect induced neurotransmitter release. Unlike other synaptotagmins, it does not bind Ca(2+) or phospholipids. Essential for mossy-fiber long-term potentiation in the hippocampus. The sequence is that of Synaptotagmin-12 (SYT12) from Homo sapiens (Human).